Here is a 216-residue protein sequence, read N- to C-terminus: Imidazole glycerol phosphate synthase subunit HisH (216 aa).

The Glutamine amidotransferase type-1 domain occupies 2 to 216 (RVAIIDYGSG…LISNFLRWKP (215 aa)). The active-site Nucleophile is C88. Active-site residues include H196 and E198.

As to quaternary structure, heterodimer of HisH and HisF.

The protein localises to the cytoplasm. The enzyme catalyses 5-[(5-phospho-1-deoxy-D-ribulos-1-ylimino)methylamino]-1-(5-phospho-beta-D-ribosyl)imidazole-4-carboxamide + L-glutamine = D-erythro-1-(imidazol-4-yl)glycerol 3-phosphate + 5-amino-1-(5-phospho-beta-D-ribosyl)imidazole-4-carboxamide + L-glutamate + H(+). It catalyses the reaction L-glutamine + H2O = L-glutamate + NH4(+). It functions in the pathway amino-acid biosynthesis; L-histidine biosynthesis; L-histidine from 5-phospho-alpha-D-ribose 1-diphosphate: step 5/9. Functionally, IGPS catalyzes the conversion of PRFAR and glutamine to IGP, AICAR and glutamate. The HisH subunit catalyzes the hydrolysis of glutamine to glutamate and ammonia as part of the synthesis of IGP and AICAR. The resulting ammonia molecule is channeled to the active site of HisF. In Rhizobium meliloti (strain 1021) (Ensifer meliloti), this protein is Imidazole glycerol phosphate synthase subunit HisH.